A 394-amino-acid chain; its full sequence is Na(+)/H(+) antiporter NhaA (394 aa).

11 helical membrane-spanning segments follow: residues 17-37 (ILLMVAVALAMILANSPLAGV), 59-79 (LLLWINDGLMALFFLLIGLEV), 95-115 (SLPSIAAIGGMVFPALFYLAF), 124-144 (VGWAIPAATDIAFALGIMALL), 154-174 (VFLLALAIIDDLGVIVIIALF), 177-197 (TDLSMTSLVIAAVSIVLMVAL), 213-233 (FILWVAVLKSGVHATLAGVII), 261-281 (FMILPVFAFANAGLSLTNMTL), 287-307 (PITLGIIMGLLLGKPIGVLLF), 328-348 (IIPVAVMCGIGFTMSVFIASL), and 363-383 (LGILTGSLLAALIGYFWLAKV).

Belongs to the NhaA Na(+)/H(+) (TC 2.A.33) antiporter family.

It is found in the cell inner membrane. It catalyses the reaction Na(+)(in) + 2 H(+)(out) = Na(+)(out) + 2 H(+)(in). Its function is as follows. Na(+)/H(+) antiporter that extrudes sodium in exchange for external protons. The polypeptide is Na(+)/H(+) antiporter NhaA (Shewanella frigidimarina (strain NCIMB 400)).